The chain runs to 161 residues: Endoribonuclease YbeY (161 aa).

Residues His121, His125, and His131 each contribute to the Zn(2+) site.

This sequence belongs to the endoribonuclease YbeY family. Zn(2+) serves as cofactor.

Its subcellular location is the cytoplasm. Single strand-specific metallo-endoribonuclease involved in late-stage 70S ribosome quality control and in maturation of the 3' terminus of the 16S rRNA. The polypeptide is Endoribonuclease YbeY (Xanthomonas euvesicatoria pv. vesicatoria (strain 85-10) (Xanthomonas campestris pv. vesicatoria)).